We begin with the raw amino-acid sequence, 548 residues long: Cytochrome P450 monooxygenase lcsK (548 aa).

The next 2 membrane-spanning stretches (helical) occupy residues 28–48 and 68–88; these read HAYP…LWAF and VLLF…RLFF. N-linked (GlcNAc...) asparagine glycosylation is found at Asn172, Asn223, Asn242, and Asn404. Cys487 serves as a coordination point for heme.

It belongs to the cytochrome P450 family. Requires heme as cofactor.

The protein localises to the membrane. The protein operates within secondary metabolite biosynthesis. Functionally, cytochrome P450 monooxygenase; part of the gene cluster that mediates the biosynthesis of the lipopeptide antibiotics leucinostatins that show extensive biological activities, including antimalarial, antiviral, antibacterial, antifungal, and antitumor activities, as well as phytotoxic. Leucinostatin A contains nine amino acid residues, including the unusual amino acid 4-methyl-L-proline (MePro), 2-amino-6-hydroxy-4-methyl-8-oxodecanoic acid (AHyMeOA), 3-hydroxyleucine (HyLeu), alpha-aminoisobutyric acid (AIB), beta-Ala, a 4-methylhex-2-enoic acid at the N-terminus as well as a N1,N1-dimethylpropane-1,2-diamine (DPD) at the C-terminus. The biosynthesis of leucinostatins is probably initiated with the assembly of 4-methylhex-2-enoic acid by a reducing PKS. Two reducing polyketide synthases, lcsB and lcsC, have been identified in the cluster and it is not clear which is the one that assembles 4-methylhex-2-enoic acid since both contain KS, AT, DH, cMT, ER, KR and ACP domains. The polyketide residue might be transferred to the NRPS lcsA, mediated by two additional enzymes, the acyl-CoA ligase lcsD and the thioesterase lcsE. The linear polyketide carboxylic acid, which is released from PKS, is converted to a CoA thioester by lcsD, and then lcsE hydrolyzes the thiol bond and shuttles the polyketide intermediate to lcsA. The C domain of the first module catalyzed the condensation of 4-methylhex-2-enoic acid and MePro carried by domain A1, followed by successive condensations of nine amino acids to trigger the elongation of the linear peptide. A5 and A6 domains of lcsA are proposed to incorporate leucine, A2 AHyMeOA, and A3 incorporates HyLeu. A4, A7 and A8 incorporate AIB. The AHyMeOA in leucinostatin A activated by the A2 might be produced by the second PKS (lcsB or lcsC) present within the cluster. The MePro is probably produced via leucine cyclization and may originate from a separate pathway, independent of the cluster. Another nonproteinogenic amino acid, beta-Ala, could be produced by an aspartic acid decarboxylase also localized outside of the cluster. Two candidates are VFPBJ_01400 and VFPBJ_10476. The final peptide scaffold may be released by the NAD(P)H-dependent thioester reductase (TE) at the C-terminal region of lcsA. Transamination of the lcsA product by the transaminase lcsP may produce DPD at the C-terminus. Further hydroxylation steps performed alternatively by the cytochrome P450 monooxygenases lcsI, lcsK and lcsN then yield the non-methylated leucinostatins precursor. It is also possible that leucines can be hydroxylated prior to their incorporation into the peptide. Varying extents of methylation then lead to the formation of leucinostatins A and B. This Purpureocillium lilacinum (Paecilomyces lilacinus) protein is Cytochrome P450 monooxygenase lcsK.